Reading from the N-terminus, the 330-residue chain is Glycerol-3-phosphate dehydrogenase [NAD(P)+] (330 aa).

Residues Ser-10, Trp-11, Arg-31, and Lys-105 each contribute to the NADPH site. Positions 105, 135, and 137 each coordinate sn-glycerol 3-phosphate. Position 139 (Ala-139) interacts with NADPH. Residues Lys-190, Asp-243, Ser-253, Arg-254, and Asn-255 each coordinate sn-glycerol 3-phosphate. The active-site Proton acceptor is Lys-190. Arg-254 is a binding site for NADPH. NADPH contacts are provided by Val-278 and Glu-280.

The protein belongs to the NAD-dependent glycerol-3-phosphate dehydrogenase family.

It is found in the cytoplasm. The catalysed reaction is sn-glycerol 3-phosphate + NAD(+) = dihydroxyacetone phosphate + NADH + H(+). The enzyme catalyses sn-glycerol 3-phosphate + NADP(+) = dihydroxyacetone phosphate + NADPH + H(+). The protein operates within membrane lipid metabolism; glycerophospholipid metabolism. Its function is as follows. Catalyzes the reduction of the glycolytic intermediate dihydroxyacetone phosphate (DHAP) to sn-glycerol 3-phosphate (G3P), the key precursor for phospholipid synthesis. In Nitratidesulfovibrio vulgaris (strain DP4) (Desulfovibrio vulgaris), this protein is Glycerol-3-phosphate dehydrogenase [NAD(P)+].